A 334-amino-acid chain; its full sequence is Heat shock factor 2-binding protein (334 aa).

Residues 14-51 (MGTKEEFVKVRKKDLERLTTEVMQIRDFLPRILNGEVL) are interaction with BRME1. The stretch at 49–122 (EVLESFQKLK…LLQQAEYCTE (74 aa)) forms a coiled coil. The interaction with BRCA2 stretch occupies residues 83–334 (ARLETVQADN…EDLRTLEHNV (252 aa)).

As to quaternary structure, associates with HSF2. The interaction seems to occur between the trimerization domain of HSF2 and the N-terminal hydrophilic region of HSF2BP. Interacts (via C-terminus) with BNC1. Interacts (via N-terminus) with BRCA2 and BRME1; the interactions are direct and allow the formation of a ternary complex. The complex BRME1:HSF2BP:BRCA2 interacts with SPATA22, MEIOB and RAD51. Sumoylated by UBE2I in response to MEKK1-mediated stimuli. Testis specific. Overexpressed in some tumors.

The protein resides in the cytoplasm. It is found in the chromosome. In terms of biological role, meiotic recombination factor component of recombination bridges involved in meiotic double-strand break repair. Modulates the localization of recombinases DMC1:RAD51 to meiotic double-strand break (DSB) sites through the interaction with BRCA2 and its recruitment during meiotic recombination. Indispensable for the DSB repair, homologous synapsis, and crossover formation that are needed for progression past metaphase I, is essential for spermatogenesis and male fertility. Required for proper recombinase recruitment in female meiosis. Inhibits BNC1 transcriptional activity during spermatogenesis, probably by sequestering it in the cytoplasm. May be involved in modulating HSF2 activation in testis. This Homo sapiens (Human) protein is Heat shock factor 2-binding protein.